The sequence spans 1835 residues: AT-rich interactive domain-containing protein 2 (1835 aa).

A2 carries the N-acetylalanine modification. S4 carries the phosphoserine modification. Residues K7, K15, and K119 each participate in a glycyl lysine isopeptide (Lys-Gly) (interchain with G-Cter in SUMO2) cross-link. The ARID domain maps to 13 to 105 (RRKGLAFLDE…YLEKYEKVHH (93 aa)). The short motif at 313-317 (LRFLL) is the LXXLL element. Residues 524 to 603 (ACQWLNAHFE…IHVVGVKRRA (80 aa)) constitute a DNA-binding region (RFX-type winged-helix). A Glycyl lysine isopeptide (Lys-Gly) (interchain with G-Cter in SUMO2) cross-link involves residue K555. S631 and S635 each carry phosphoserine. At T653 the chain carries Phosphothreonine. S689 bears the Phosphoserine mark. T692 is modified (phosphothreonine). 5 disordered regions span residues 819–844 (QQLITTSPQPVQTSSQQTSAGSQSQD), 962–1057 (LTGQ…SGES), 1266–1287 (MENPSCRRGATNTSNGDTKENE), 1295–1314 (NGRKYSDSSLPPSNSGKIQS), and 1321–1341 (LISNGPSLELGENGASGKQNS). Composition is skewed to low complexity over residues 823–843 (TTSPQPVQTSSQQTSAGSQSQ), 985–996 (PTAMSSSSTPQS), and 1025–1044 (QVQVQVQQPQQVQMQVQPQQ). S1300 is subject to Phosphoserine. The span at 1301–1314 (DSSLPPSNSGKIQS) shows a compositional bias: polar residues. A phosphoserine mark is found at S1391 and S1496. Disordered stretches follow at residues 1488 to 1522 (DSGSKVSHSPALSSDVRSTNGTAECKTVKRPAEDT) and 1572 to 1629 (SAVQ…RKPG). The span at 1491–1509 (SKVSHSPALSSDVRSTNGT) shows a compositional bias: polar residues. Residues 1513-1522 (KTVKRPAEDT) show a composition bias toward basic and acidic residues. Residues 1573-1592 (AVQQKQQHPPTYVQNVVPQN) show a composition bias toward polar residues. Residues 1602 to 1623 (QVQGQPNSSQPSPFSGSSQPGD) are compositionally biased toward low complexity. The C2H2-type zinc finger occupies 1632-1657 (FMCLWQSCKKWFQTPSQVFYHAATEH). Residues K1701, K1716, and K1731 each participate in a glycyl lysine isopeptide (Lys-Gly) (interchain with G-Cter in SUMO2) cross-link. Positions 1703-1728 (DEPGQAGSQKSSTKQPTVGGTSSTPR) are disordered. Positions 1708–1728 (AGSQKSSTKQPTVGGTSSTPR) are enriched in polar residues.

As to quaternary structure, component of the SWI/SNF-B (PBAF) chromatin remodeling complex, at least composed of SMARCA4/BRG1, SMARCB1/BAF47/SNF5, ACTL6A/BAF53A or ACTL6B/BAF53B, SMARCE1/BAF57, SMARCD1/BAF60A, SMARCD2/BAF60B, perhaps SMARCD3/BAF60C, SMARCC1/BAF155, SMARCC2/BAF170, PBRM1/BAF180, ARID2/BAF200 and actin. Interacts with SRF. Forms complexes with SRF and SRF cofactors MYOCD, NKX2-5 and SRFBP1. As to expression, highly expressed in heart.

The protein resides in the nucleus. Involved in transcriptional activation and repression of select genes by chromatin remodeling (alteration of DNA-nucleosome topology). Required for the stability of the SWI/SNF chromatin remodeling complex SWI/SNF-B (PBAF). May be involved in targeting the complex to different genes. May be involved in regulating transcriptional activation of cardiac genes. In Homo sapiens (Human), this protein is AT-rich interactive domain-containing protein 2.